The following is a 388-amino-acid chain: Pentatricopeptide repeat-containing protein 2, mitochondrial (388 aa).

The stretch at 166-200 (TSFNILMDMLFIKGKYKSALQVLIEMKNQDVKFTK) is one PPR repeat. S382 carries the phosphoserine modification.

This sequence belongs to the PTCD2 family.

The protein resides in the mitochondrion. In terms of biological role, involved in mitochondrial RNA maturation and mitochondrial respiratory chain function. The chain is Pentatricopeptide repeat-containing protein 2, mitochondrial (PTCD2) from Homo sapiens (Human).